A 459-amino-acid polypeptide reads, in one-letter code: Nuclear distribution protein PAC1-2 (459 aa).

The stretch at 56 to 83 (TSIVRLQKKIMDLESRNAALQTELANLT) forms a coiled coil. 8 WD repeats span residues 108–149 (SHRD…RTVK), 151–191 (HTRA…KNIR), 195–244 (GHDH…KTLR), 246–284 (HTAW…SDHK), 306–348 (QYLA…LGTL), 350–389 (GHDN…KCVK), 394–438 (AHER…DTPD), and 440–459 (QVRC…VFAD).

The protein belongs to the WD repeat LIS1/nudF family. As to quaternary structure, self-associates. Interacts with NDL1 and dynein.

It is found in the cytoplasm. It localises to the cytoskeleton. The protein resides in the spindle pole. Its function is as follows. Positively regulates the activity of the minus-end directed microtubule motor protein dynein. May enhance dynein-mediated microtubule sliding by targeting dynein to the microtubule plus end. Required for nuclear migration during vegetative growth as well as development. Required for retrograde early endosome (EE) transport from the hyphal tip. Required for localization of dynein to the mitotic spindle poles. Recruits additional proteins to the dynein complex at SPBs. This Uncinocarpus reesii (strain UAMH 1704) protein is Nuclear distribution protein PAC1-2.